Here is a 117-residue protein sequence, read N- to C-terminus: Fluoride-specific ion channel FluC 2 (117 aa).

The next 4 helical transmembrane spans lie at 4-24, 31-51, 59-79, and 94-114; these read FLIGIGGACGSIVRYKIGDII, KFPWGTFIINITGAFLLGIIT, LSMILADGFLGAYTTFSTFMY, and LIYILSSIIIGILGFYMGEFI. Na(+) is bound by residues Gly69 and Thr72.

This sequence belongs to the fluoride channel Fluc/FEX (TC 1.A.43) family.

The protein resides in the cell membrane. The catalysed reaction is fluoride(in) = fluoride(out). Na(+) is not transported, but it plays an essential structural role and its presence is essential for fluoride channel function. In terms of biological role, fluoride-specific ion channel. Important for reducing fluoride concentration in the cell, thus reducing its toxicity. The chain is Fluoride-specific ion channel FluC 2 from Clostridium acetobutylicum (strain ATCC 824 / DSM 792 / JCM 1419 / IAM 19013 / LMG 5710 / NBRC 13948 / NRRL B-527 / VKM B-1787 / 2291 / W).